Consider the following 749-residue polypeptide: MASIDPYQHIIVEHQYSHRFTVTVIKATNVTKGTFGDMLDTPDPYVELYISSAPDSRKRTKHFNNNINPVWNETFEFILDPNQDNVLEITLMDANYVMDESLGTTTFPILSVKPGEKKQVPFTFNKVTEMILEFSLEVCSSTDLRFSMALCDQEKLFRQKRKNKVINGLRKLLGPEKTQDLNSTSRDVPVIAVLGSGGGFRAMIGFSGVMKALYESGVLDCATYVAGLSGSTWYMSTLYSHPDFPTKGPKEINKELMHNVSYNPLLLLTPQKVKRYVEALWKKKSSGQPVTFTDIFAMLIGETLIKDRMNRKLSHMQEKINDGQCPLPLFTCLHVKPDVSELMFADWVEFSPYEIGMAKYGTFMPPGLFGSKFFMGTVIKKYEENPLHFFMGVWGSAFSILINRVLGVSNNSKGSTMEEEIENLKPKHILGNDSSDSDDEMQEPKGTENAKAEEEYLRNNQASWVQRMLMAILGDSAIFNTREGRAGKVHNFMLGLNLNTSYPYSPLSGLCTQQSMEEDELDAAVADPDEFEQIYEPLDVKSKKIHIVDSGLTFNLPYPLILRPQRGVDLIISFDFSARPSDSSPPFKELLLAEKWARMNKLPFPKIDPHVFDREGLKECYIFKPKNTSVEKDCPTVIHFVLANLQFRNFKAPGVPRETTEEKESADFDIFDDPETPFSTFNFQYPNVAFKQLHDLMEFNTLNNINVIKQAMVESIEYRRQHPSRCSVSLNDVESRKLHHKDSQSKFQM.

The 124-residue stretch at 1-124 (MASIDPYQHI…GEKKQVPFTF (124 aa)) folds into the C2 domain. The interval 1 to 178 (MASIDPYQHI…LRKLLGPEKT (178 aa)) is phospholipid binding. Residues Asp40, Thr41, Asp43, Asn65, Asp93, Ala94, and Asn95 each contribute to the Ca(2+) site. The region spanning 138 to 740 (VCSSTDLRFS…NDVESRKLHH (603 aa)) is the PLA2c domain. The active-site Nucleophile is Ser229. Positions 428 to 452 (HILGNDSSDSDDEMQEPKGTENAKA) are disordered. Basic and acidic residues predominate over residues 442-452 (QEPKGTENAKA). The active-site Proton acceptor is the Asp549. A disordered region spans residues 729-749 (SLNDVESRKLHHKDSQSKFQM). Basic and acidic residues predominate over residues 733–749 (VESRKLHHKDSQSKFQM).

It is found in the cytoplasm. Its subcellular location is the cytoplasmic vesicle. It catalyses the reaction a 1,2-diacyl-sn-glycero-3-phosphocholine + H2O = a 1-acyl-sn-glycero-3-phosphocholine + a fatty acid + H(+). It carries out the reaction a 1-acyl-sn-glycero-3-phosphocholine + H2O = sn-glycerol 3-phosphocholine + a fatty acid + H(+). Stimulated by agonists such as ATP, EGF, thrombin and bradykinin as well as by cytosolic Ca(2+). In terms of biological role, selectively hydrolyzes arachidonyl phospholipids in the sn-2 position releasing arachidonic acid. Together with its lysophospholipid activity, it is implicated in the initiation of the inflammatory response. The polypeptide is Cytosolic phospholipase A2 (pla2g4a) (Xenopus laevis (African clawed frog)).